The sequence spans 120 residues: Cytochrome c oxidase subunit 5 (120 aa).

Ser-2 bears the Blocked amino end (Ser) mark. Residues Cys-76, His-84, Cys-99, and Cys-102 each contribute to the Zn(2+) site.

This sequence belongs to the cytochrome c oxidase subunit 5B family. As to quaternary structure, component of the cytochrome c oxidase (complex IV, CIV), a multisubunit enzyme composed of a catalytic core of 3 subunits and several supernumerary subunits. The complex exists as a monomer or a dimer and forms supercomplexes (SCs) in the inner mitochondrial membrane with ubiquinol-cytochrome c oxidoreductase (cytochrome b-c1 complex, complex III, CIII). Slime mold cytochrome c oxidase consists of at least seven different polypeptides species, subunits I, II, III, IV, V, VI, and VIIe/s in order of MW.

The protein localises to the mitochondrion inner membrane. Its pathway is energy metabolism; oxidative phosphorylation. Component of the cytochrome c oxidase, the last enzyme in the mitochondrial electron transport chain which drives oxidative phosphorylation. The respiratory chain contains 3 multisubunit complexes succinate dehydrogenase (complex II, CII), ubiquinol-cytochrome c oxidoreductase (cytochrome b-c1 complex, complex III, CIII) and cytochrome c oxidase (complex IV, CIV), that cooperate to transfer electrons derived from NADH and succinate to molecular oxygen, creating an electrochemical gradient over the inner membrane that drives transmembrane transport and the ATP synthase. Cytochrome c oxidase is the component of the respiratory chain that catalyzes the reduction of oxygen to water. Electrons originating from reduced cytochrome c in the intermembrane space (IMS) are transferred via the dinuclear copper A center (CU(A)) of subunit 2 and heme A of subunit 1 to the active site in subunit 1, a binuclear center (BNC) formed by heme A3 and copper B (CU(B)). The BNC reduces molecular oxygen to 2 water molecules using 4 electrons from cytochrome c in the IMS and 4 protons from the mitochondrial matrix. The chain is Cytochrome c oxidase subunit 5 (cxeA) from Dictyostelium discoideum (Social amoeba).